Here is a 380-residue protein sequence, read N- to C-terminus: Alkaline protease (380 aa).

Residues 1 to 27 form the signal peptide; the sequence is MKKPLGKIVASTALLISVAFSSSIASA. Positions 28–112 are excised as a propeptide; that stretch reads AEEAKEKYLI…EEDAEVTTMA (85 aa). An Inhibitor I9 domain is found at 34-111; it reads KYLIGFNEQE…IEEDAEVTTM (78 aa). A Ca(2+)-binding site is contributed by Q113. The 264-residue stretch at 116 to 379 folds into the Peptidase S8 domain; the sequence is PWGISRVQAP…SGLVNAEAAT (264 aa). D143 acts as the Charge relay system in catalysis. D151 provides a ligand contact to Ca(2+). H173 serves as the catalytic Charge relay system. Positions 184, 186, 188, 190, 274, 276, and 279 each coordinate Ca(2+). The active-site Charge relay system is the S326.

The protein belongs to the peptidase S8 family. Ca(2+) serves as cofactor.

Its subcellular location is the secreted. The chain is Alkaline protease from Alkalihalobacillus alcalophilus (Bacillus alcalophilus).